A 373-amino-acid polypeptide reads, in one-letter code: Spermidine/putrescine import ATP-binding protein PotA (373 aa).

The 231-residue stretch at 8–238 (FELRGVSKYF…PANLYVARFV (231 aa)) folds into the ABC transporter domain. Residue 40-47 (GPSGCGKT) coordinates ATP.

Belongs to the ABC transporter superfamily. Spermidine/putrescine importer (TC 3.A.1.11.1) family. As to quaternary structure, the complex is composed of two ATP-binding proteins (PotA), two transmembrane proteins (PotB and PotC) and a solute-binding protein (PotD).

It localises to the cell inner membrane. The enzyme catalyses ATP + H2O + polyamine-[polyamine-binding protein]Side 1 = ADP + phosphate + polyamineSide 2 + [polyamine-binding protein]Side 1.. In terms of biological role, part of the ABC transporter complex PotABCD involved in spermidine/putrescine import. Responsible for energy coupling to the transport system. In Oleidesulfovibrio alaskensis (strain ATCC BAA-1058 / DSM 17464 / G20) (Desulfovibrio alaskensis), this protein is Spermidine/putrescine import ATP-binding protein PotA.